Consider the following 127-residue polypeptide: Multifunctional methyltransferase subunit trm112 (127 aa).

The TRM112 domain maps to 2-123 (KVMTLNFLTC…KNGVANFLLP (122 aa)).

Belongs to the TRM112 family. As to quaternary structure, heterodimer of mtq2-rmt-1/trm112, forming the eRF1 methyltransferase. Rmt-1/trm112 is necessary for the solubility and activity of the catalytic subunit mtq2. Interacts with trm11; required for full tRNA methyltransferase activity. Interacts with bud23; required for full rRNA methyltransferase activity.

It is found in the cytoplasm. Its subcellular location is the nucleus. Acts as an activator of both rRNA/tRNA and protein methyltransferases. Together with methyltransferase mtq2, required for the methylation of eRF1 on 'Gln-182'. Together with methyltransferase trm11, required for the formation of 2-methylguanosine at position 10 (m2G10) in tRNA. Together with methyltransferase bud23, required for the formation of a 7-methylguanine in 18S rRNA. Involved in biogenesis of both 40S and 60S ribosomal subunits. The protein is Multifunctional methyltransferase subunit trm112 (rmt-1) of Neurospora crassa (strain ATCC 24698 / 74-OR23-1A / CBS 708.71 / DSM 1257 / FGSC 987).